The sequence spans 115 residues: UPF0738 protein SH1953 (115 aa).

The protein belongs to the UPF0738 family.

This is UPF0738 protein SH1953 from Staphylococcus haemolyticus (strain JCSC1435).